Here is a 320-residue protein sequence, read N- to C-terminus: Ferrochelatase (320 aa).

Fe cation-binding residues include H194 and E275.

The protein belongs to the ferrochelatase family. Monomer.

Its subcellular location is the cytoplasm. It carries out the reaction heme b + 2 H(+) = protoporphyrin IX + Fe(2+). It functions in the pathway porphyrin-containing compound metabolism; protoheme biosynthesis; protoheme from protoporphyrin-IX: step 1/1. Catalyzes the ferrous insertion into protoporphyrin IX. This is Ferrochelatase from Shigella flexneri serotype 5b (strain 8401).